We begin with the raw amino-acid sequence, 150 residues long: Large ribosomal subunit protein uL15 (150 aa).

Residues Ile18–Gly43 are disordered.

Belongs to the universal ribosomal protein uL15 family. In terms of assembly, part of the 50S ribosomal subunit.

Binds to the 23S rRNA. The sequence is that of Large ribosomal subunit protein uL15 from Treponema denticola (strain ATCC 35405 / DSM 14222 / CIP 103919 / JCM 8153 / KCTC 15104).